Here is a 217-residue protein sequence, read N- to C-terminus: N-(5'-phosphoribosyl)anthranilate isomerase (217 aa).

The protein belongs to the TrpF family.

The enzyme catalyses N-(5-phospho-beta-D-ribosyl)anthranilate = 1-(2-carboxyphenylamino)-1-deoxy-D-ribulose 5-phosphate. The protein operates within amino-acid biosynthesis; L-tryptophan biosynthesis; L-tryptophan from chorismate: step 3/5. This Acaryochloris marina (strain MBIC 11017) protein is N-(5'-phosphoribosyl)anthranilate isomerase.